A 1048-amino-acid polypeptide reads, in one-letter code: FERM, ARHGEF and pleckstrin domain-containing protein 1 (1048 aa).

The interval 1–37 (MGEIEQKPTPASRLGAPENSGISTLERGQKPPPTPSG) is disordered. Ser20 and Ser23 each carry phosphoserine. Thr24 carries the phosphothreonine modification. The region spanning 40 to 320 (MTVKIQMLDD…EHHAFFRLFE (281 aa)) is the FERM domain. Phosphoserine is present on residues Ser340, Ser373, Ser389, Ser403, Ser427, Ser433, and Ser437. Residues 361-536 (FERKHSKIHS…TDDEEEGRRK (176 aa)) are disordered. Positions 371 to 395 (TRSLVSQPTAPNSEVPKQSPQSASL) are enriched in polar residues. Composition is skewed to polar residues over residues 472 to 491 (STGSLTGSPHLSELSINSQG) and 498 to 513 (VTLSPNLSPDNKQASP). Phosphoserine is present on residues Ser512 and Ser516. The region spanning 542–733 (KAYYIAKEVS…TEMVAQLHGT (192 aa)) is the DH domain. In terms of domain architecture, PH 1 spans 762 to 859 (EFIRLGSLSK…WMEDIQMAID (98 aa)). Residues Ser836, Ser875, and Ser881 each carry the phosphoserine modification. The disordered stretch occupies residues 865 to 907 (NGPTPELLASSPPDNKSPDEATAADQESEDDLSASRTSLERQA). Position 886 is a phosphothreonine (Thr886). Phosphoserine is present on residues Ser892, Ser899, and Ser902. One can recognise a PH 2 domain in the interval 935-1032 (ENQLSGNLLR…WMEVIRSATS (98 aa)).

As to quaternary structure, interacts with CADM1. Interacts with RAC1. Detected in brain cortex, hippocampus, striatum, olfactory bulb, cerebellum and hindbrain (at protein level).

The protein localises to the cell membrane. It is found in the synapse. Its subcellular location is the synaptosome. It localises to the cytoplasm. The protein resides in the cytosol. The protein localises to the cell projection. It is found in the filopodium. Its subcellular location is the dendrite. It localises to the dendritic spine. Functions as a guanine nucleotide exchange factor for RAC1. May play a role in semaphorin signaling. Plays a role in the assembly and disassembly of dendritic filopodia, the formation of dendritic spines, regulation of dendrite length and ultimately the formation of synapses. The chain is FERM, ARHGEF and pleckstrin domain-containing protein 1 (Farp1) from Mus musculus (Mouse).